A 157-amino-acid chain; its full sequence is Dihydrofolate reductase type 1 (157 aa).

A DHFR domain is found at 2-156 (KLSLMVAISK…INYSYQIWQK (155 aa)).

The protein belongs to the dihydrofolate reductase family. Homodimer.

It catalyses the reaction (6S)-5,6,7,8-tetrahydrofolate + NADP(+) = 7,8-dihydrofolate + NADPH + H(+). The protein operates within cofactor biosynthesis; tetrahydrofolate biosynthesis; 5,6,7,8-tetrahydrofolate from 7,8-dihydrofolate: step 1/1. Functionally, key enzyme in folate metabolism. Catalyzes an essential reaction for de novo glycine and purine synthesis, and for DNA precursor synthesis. The polypeptide is Dihydrofolate reductase type 1 (dhfrI) (Escherichia coli).